The chain runs to 631 residues: Leukocyte immunoglobulin-like receptor subfamily B member 3 (631 aa).

A signal peptide spans Met1–Ala23. At Gly24–Glu443 the chain is on the extracellular side. Ig-like C2-type domains follow at residues Gly42 to Tyr100, Asp111 to Thr229, Pro225 to Asn314, and Gly338 to Ser419. Cys49 and Cys98 are joined by a disulfide. Basic and acidic residues predominate over residues Arg59 to Asp70. Residues Arg59–Lys78 are disordered. The N-linked (GlcNAc...) asparagine glycan is linked to Asn139. Intrachain disulfides connect Cys144–Cys196 and Cys245–Cys296. N-linked (GlcNAc...) asparagine glycans are attached at residues Asn280, Asn301, and Asn340. Cysteines 345 and 396 form a disulfide. A helical transmembrane segment spans residues Val444–Leu464. Residues Arg465–His631 are Cytoplasmic-facing. The segment at Ser470–His631 is disordered. Basic and acidic residues predominate over residues Arg473–Phe482. The short motif at Asn512 to Val517 is the ITIM motif 1 element. Composition is skewed to basic and acidic residues over residues Thr520 to Asp537 and Leu567 to Asp581. Positions Glu588–Ser600 are enriched in polar residues. 2 consecutive short sequence motifs (ITIM motif) follow at residues Val593 to Leu598 and Ser623 to Leu628. Residues Tyr595 and Tyr625 each carry the phosphotyrosine; by LYN modification.

In terms of assembly, interacts with LYN, PTPN6/SHP-1 and PTPN11/SHP-2. In terms of processing, phosphorylated on tyrosine residues by LYN. Phosphorylation at Tyr-595 and Tyr-625 is important for interaction with PTPN6/SHP-1 and PTPN11/SHP-2. As to expression, detected in monocytes and B-cells.

Its subcellular location is the cell membrane. In terms of biological role, may act as receptor for class I MHC antigens. Becomes activated upon coligation of LILRB3 and immune receptors, such as FCGR2B and the B-cell receptor. Down-regulates antigen-induced B-cell activation by recruiting phosphatases to its immunoreceptor tyrosine-based inhibitor motifs (ITIM). In Homo sapiens (Human), this protein is Leukocyte immunoglobulin-like receptor subfamily B member 3 (LILRB3).